Reading from the N-terminus, the 227-residue chain is Cytochrome c oxidase subunit 2 (227 aa).

The Mitochondrial intermembrane portion of the chain corresponds to 1–14 (MAHPVQLGLQDATS). The chain crosses the membrane as a helical span at residues 15-45 (PVMEELITFHDYALMTISLISFLVLYALFST). Residues 46-59 (LTTKLTNTNITDAQ) lie on the Mitochondrial matrix side of the membrane. A helical membrane pass occupies residues 60-87 (EMETTWTILPAVILILIALPSLRILYLT). Residues 88–227 (DEINNPSFTI…IFEMGPVFTL (140 aa)) are Mitochondrial intermembrane-facing. Residues histidine 161, cysteine 196, glutamate 198, cysteine 200, histidine 204, and methionine 207 each contribute to the Cu cation site. Glutamate 198 contributes to the Mg(2+) binding site.

This sequence belongs to the cytochrome c oxidase subunit 2 family. In terms of assembly, component of the cytochrome c oxidase (complex IV, CIV), a multisubunit enzyme composed of 14 subunits. The complex is composed of a catalytic core of 3 subunits MT-CO1, MT-CO2 and MT-CO3, encoded in the mitochondrial DNA, and 11 supernumerary subunits COX4I, COX5A, COX5B, COX6A, COX6B, COX6C, COX7A, COX7B, COX7C, COX8 and NDUFA4, which are encoded in the nuclear genome. The complex exists as a monomer or a dimer and forms supercomplexes (SCs) in the inner mitochondrial membrane with NADH-ubiquinone oxidoreductase (complex I, CI) and ubiquinol-cytochrome c oxidoreductase (cytochrome b-c1 complex, complex III, CIII), resulting in different assemblies (supercomplex SCI(1)III(2)IV(1) and megacomplex MCI(2)III(2)IV(2)). Found in a complex with TMEM177, COA6, COX18, COX20, SCO1 and SCO2. Interacts with TMEM177 in a COX20-dependent manner. Interacts with COX20. Interacts with COX16. The cofactor is Cu cation.

It is found in the mitochondrion inner membrane. It carries out the reaction 4 Fe(II)-[cytochrome c] + O2 + 8 H(+)(in) = 4 Fe(III)-[cytochrome c] + 2 H2O + 4 H(+)(out). In terms of biological role, component of the cytochrome c oxidase, the last enzyme in the mitochondrial electron transport chain which drives oxidative phosphorylation. The respiratory chain contains 3 multisubunit complexes succinate dehydrogenase (complex II, CII), ubiquinol-cytochrome c oxidoreductase (cytochrome b-c1 complex, complex III, CIII) and cytochrome c oxidase (complex IV, CIV), that cooperate to transfer electrons derived from NADH and succinate to molecular oxygen, creating an electrochemical gradient over the inner membrane that drives transmembrane transport and the ATP synthase. Cytochrome c oxidase is the component of the respiratory chain that catalyzes the reduction of oxygen to water. Electrons originating from reduced cytochrome c in the intermembrane space (IMS) are transferred via the dinuclear copper A center (CU(A)) of subunit 2 and heme A of subunit 1 to the active site in subunit 1, a binuclear center (BNC) formed by heme A3 and copper B (CU(B)). The BNC reduces molecular oxygen to 2 water molecules using 4 electrons from cytochrome c in the IMS and 4 protons from the mitochondrial matrix. This is Cytochrome c oxidase subunit 2 (MT-CO2) from Chlorocebus aethiops (Green monkey).